Reading from the N-terminus, the 222-residue chain is Cytidylate kinase (222 aa).

Residue 7 to 15 (GPSASGKST) coordinates ATP.

Belongs to the cytidylate kinase family. Type 1 subfamily.

It localises to the cytoplasm. It carries out the reaction CMP + ATP = CDP + ADP. The enzyme catalyses dCMP + ATP = dCDP + ADP. In Aquifex aeolicus (strain VF5), this protein is Cytidylate kinase.